A 178-amino-acid chain; its full sequence is RNA-binding protein (178 aa).

The disordered stretch occupies residues serine 108 to arginine 178. Positions serine 168–arginine 178 are enriched in basic residues.

This sequence belongs to the phytoreovirus RNA-binding protein family.

The protein resides in the host cytoplasm. Constituent of viral factories. Binds to ssRNA and dsRNA. This is RNA-binding protein from Wound tumor virus (strain NJ) (WTV).